A 618-amino-acid polypeptide reads, in one-letter code: DNA mismatch repair protein MutL (618 aa).

Low complexity predominate over residues 366 to 381 (AEPTAAREPATPRYSG). The disordered stretch occupies residues 366–403 (AEPTAAREPATPRYSGGASGGNGGRQSAGGWPHAQPGY). Gly residues predominate over residues 382-392 (GASGGNGGRQS).

It belongs to the DNA mismatch repair MutL/HexB family.

Its function is as follows. This protein is involved in the repair of mismatches in DNA. It is required for dam-dependent methyl-directed DNA mismatch repair. May act as a 'molecular matchmaker', a protein that promotes the formation of a stable complex between two or more DNA-binding proteins in an ATP-dependent manner without itself being part of a final effector complex. The chain is DNA mismatch repair protein MutL from Salmonella schwarzengrund (strain CVM19633).